A 439-amino-acid chain; its full sequence is Lipid-A-disaccharide synthase (439 aa).

This sequence belongs to the LpxB family.

It carries out the reaction a lipid X + a UDP-2-N,3-O-bis[(3R)-3-hydroxyacyl]-alpha-D-glucosamine = a lipid A disaccharide + UDP + H(+). It functions in the pathway bacterial outer membrane biogenesis; LPS lipid A biosynthesis. Condensation of UDP-2,3-diacylglucosamine and 2,3-diacylglucosamine-1-phosphate to form lipid A disaccharide, a precursor of lipid A, a phosphorylated glycolipid that anchors the lipopolysaccharide to the outer membrane of the cell. The protein is Lipid-A-disaccharide synthase of Xanthomonas axonopodis pv. citri (strain 306).